A 271-amino-acid polypeptide reads, in one-letter code: Protein FANTASTIC FOUR 1 (271 aa).

In terms of domain architecture, FAF spans 114–168 (NSFPPPLNSVNGFNNSRMVKSYKEDGRLVVQAIRVCSPPRCFVSERREGRLRLCL). Residues 174–255 (NSQDAEEEFE…KRRCNENGCE (82 aa)) form a disordered region. Residues 177–224 (DAEEEFEEEDEDDQYDAEEEEEEEEEEEEEEEEEEEEEEEEEEEDEEG) are compositionally biased toward acidic residues. Basic residues predominate over residues 237 to 247 (GNKKVSNRPKR).

This sequence belongs to the fantastic four family. In terms of tissue distribution, expressed in the shoot apex, stamens, anthers and young siliques. Detected in provascular and vascular tissue.

Functionally, able to repress WUS when constitutively overexpressed, but have no effect on CLV3. The chain is Protein FANTASTIC FOUR 1 (FAF1) from Arabidopsis thaliana (Mouse-ear cress).